The following is a 287-amino-acid chain: tRNA-cytidine(32) 2-sulfurtransferase (287 aa).

A PP-loop motif motif is present at residues 58 to 63 (SGGKDS). Cysteine 133, cysteine 136, and cysteine 224 together coordinate [4Fe-4S] cluster.

It belongs to the TtcA family. In terms of assembly, homodimer. Requires Mg(2+) as cofactor. It depends on [4Fe-4S] cluster as a cofactor.

Its subcellular location is the cytoplasm. It carries out the reaction cytidine(32) in tRNA + S-sulfanyl-L-cysteinyl-[cysteine desulfurase] + AH2 + ATP = 2-thiocytidine(32) in tRNA + L-cysteinyl-[cysteine desulfurase] + A + AMP + diphosphate + H(+). It functions in the pathway tRNA modification. Its function is as follows. Catalyzes the ATP-dependent 2-thiolation of cytidine in position 32 of tRNA, to form 2-thiocytidine (s(2)C32). The sulfur atoms are provided by the cysteine/cysteine desulfurase (IscS) system. The protein is tRNA-cytidine(32) 2-sulfurtransferase of Dinoroseobacter shibae (strain DSM 16493 / NCIMB 14021 / DFL 12).